The primary structure comprises 270 residues: MKFLEKLKQAGNRNKSLLCVGLDPDPKLMPVGMSALEFNREIIEATAPFVCGYKINLAFYEALGKQGWEILSETCEFIPRELITIADAKRGDIGNTSKAYARAILDELDCDGVTVSPYLGYDSLEPFIEYQDKGIFILCLTSNQGSTDFQMLKTEYLGQKRFLYEVVADKASLWNRYENIGLVVGATQQEELKKLRLIYPKLPFLIPGIGAQGGDLKATIENGTNPNGELAIICASRGILYARSGSEFAQGAAEAAEQMRDAINHYRKRF.

The active-site Proton donor is the Lys-89.

The protein belongs to the OMP decarboxylase family. Type 2 subfamily.

It carries out the reaction orotidine 5'-phosphate + H(+) = UMP + CO2. It functions in the pathway pyrimidine metabolism; UMP biosynthesis via de novo pathway; UMP from orotate: step 2/2. This chain is Orotidine 5'-phosphate decarboxylase, found in Dehalococcoides mccartyi (strain ATCC BAA-2100 / JCM 16839 / KCTC 5957 / BAV1).